Reading from the N-terminus, the 361-residue chain is Probable pectinesterase 49 (361 aa).

Residues 1–22 form the signal peptide; it reads MGYISLALVALLVFFASPVVLA. Residue Asn-128 is glycosylated (N-linked (GlcNAc...) asparagine). Gln-174 provides a ligand contact to substrate. The active-site Proton donor is Asp-197. Asp-218 acts as the Nucleophile in catalysis. Arg-275 and Trp-277 together coordinate substrate.

The protein belongs to the pectinesterase family. In terms of tissue distribution, expressed in flower buds.

It is found in the secreted. Its subcellular location is the cell wall. It catalyses the reaction [(1-&gt;4)-alpha-D-galacturonosyl methyl ester](n) + n H2O = [(1-&gt;4)-alpha-D-galacturonosyl](n) + n methanol + n H(+). Its pathway is glycan metabolism; pectin degradation; 2-dehydro-3-deoxy-D-gluconate from pectin: step 1/5. Functionally, acts in the modification of cell walls via demethylesterification of cell wall pectin. This is Probable pectinesterase 49 (PME49) from Arabidopsis thaliana (Mouse-ear cress).